A 294-amino-acid polypeptide reads, in one-letter code: 33 kDa chaperonin (294 aa).

2 disulfides stabilise this stretch: cysteine 231/cysteine 233 and cysteine 264/cysteine 267.

This sequence belongs to the HSP33 family. In terms of processing, under oxidizing conditions two disulfide bonds are formed involving the reactive cysteines. Under reducing conditions zinc is bound to the reactive cysteines and the protein is inactive.

It is found in the cytoplasm. Redox regulated molecular chaperone. Protects both thermally unfolding and oxidatively damaged proteins from irreversible aggregation. Plays an important role in the bacterial defense system toward oxidative stress. The polypeptide is 33 kDa chaperonin (Aeromonas salmonicida (strain A449)).